A 1363-amino-acid chain; its full sequence is Collagen alpha-2(I) chain (1363 aa).

A signal peptide spans 1 to 22 (MLSFVDTRILLLLAVTSYLATS). Glutamine 23 is modified (pyrrolidone carboxylic acid). A propeptide spans 23–77 (QHLFQASAGRKGPRGDKGPQGERGPPGPPGRDGEDGPPGPPGPPGPPGLGGNFAA) (N-terminal propeptide). Residues 28–1110 (ASAGRKGPRG…GPNGGGYEVG (1083 aa)) are disordered. The span at 59 to 69 (PPGPPGPPGPP) shows a compositional bias: pro residues. The residue at position 78 (glutamine 78) is a Pyrrolidone carboxylic acid. At lysine 83 the chain carries Allysine. A compositionally biased stretch (low complexity) spans 88–97 (GPGPMGLMGP). Residues 98–110 (RGPPGASGPPGPP) show a composition bias toward pro residues. A compositionally biased stretch (low complexity) spans 112–128 (FQGVPGEPGEPGQTGPQ). A compositionally biased stretch (basic and acidic residues) spans 140 to 154 (AGEDGHPGKPGRPGE). Lysine 176 is subject to 5-hydroxylysine; alternate. O-linked (Gal...) hydroxylysine; alternate glycosylation occurs at lysine 176. Low complexity-rich tracts occupy residues 224-263 (IGAP…PGAK) and 299-320 (PGAN…AGAP). Residues 322–335 (LPGPRGIPGPPGPA) show a composition bias toward pro residues. 2 positions are modified to 4-hydroxyproline: proline 440 and proline 443. Composition is skewed to low complexity over residues 601-610 (PAGPIGSRGP) and 674-683 (RGLPGAIGAP). Residues 684 to 699 (GPAGGAGDRGEGGPAG) show a composition bias toward gly residues. The span at 721-736 (PSGFAGPPGAAGQPGA) shows a compositional bias: low complexity. The span at 737–746 (KGERGPKGPK) shows a compositional bias: basic and acidic residues. 5 stretches are compositionally biased toward low complexity: residues 748 to 794 (ETGP…AGRV), 842 to 875 (AGEK…LGLP), 898 to 931 (VSGP…NPGN), 955 to 965 (PSGALGAPGPH), and 986 to 995 (VGPAGAFGPR). The span at 1004 to 1015 (RGEKGEPGDKGH) shows a compositional bias: basic and acidic residues. Positions 1036 to 1049 (QHGDQGPPGNNGPA) are enriched in low complexity. Pro residues-rich tracts occupy residues 1051 to 1060 (PRGPPGPSGP) and 1088 to 1102 (AGPP…PPGP). The propeptide at 1118 to 1363 (ADQPSLRPKD…GLHIGPVCFK (246 aa)) is C-terminal propeptide. The region spanning 1128 to 1363 (YEVDATLKTL…GLHIGPVCFK (236 aa)) is the Fibrillar collagen NC1 domain. 3 disulfide bridges follow: cysteine 1158–cysteine 1190, cysteine 1198–cysteine 1361, and cysteine 1269–cysteine 1314. 5 residues coordinate Ca(2+): aspartate 1176, asparagine 1178, glutamine 1179, cysteine 1181, and aspartate 1184. N-linked (GlcNAc...) asparagine glycosylation occurs at asparagine 1264.

This sequence belongs to the fibrillar collagen family. As to quaternary structure, trimers of one alpha 2(I) and two alpha 1(I) chains. Post-translationally, prolines at the third position of the tripeptide repeating unit (G-X-Y) are hydroxylated in some or all of the chains. In terms of processing, the N-terminus of the mature protein is blocked. Forms the fibrils of tendon, ligaments and bones. In bones the fibrils are mineralized with calcium hydroxyapatite.

Its subcellular location is the secreted. It is found in the extracellular space. It localises to the extracellular matrix. Functionally, type I collagen is a member of group I collagen (fibrillar forming collagen). This chain is Collagen alpha-2(I) chain (COL1A2), found in Gallus gallus (Chicken).